Consider the following 184-residue polypeptide: Protein GrpE (184 aa).

Positions 1–24 (MADEQLDEKNLNSEEAGAVNGDAR) are disordered.

The protein belongs to the GrpE family. Homodimer.

The protein localises to the cytoplasm. Functionally, participates actively in the response to hyperosmotic and heat shock by preventing the aggregation of stress-denatured proteins, in association with DnaK and GrpE. It is the nucleotide exchange factor for DnaK and may function as a thermosensor. Unfolded proteins bind initially to DnaJ; upon interaction with the DnaJ-bound protein, DnaK hydrolyzes its bound ATP, resulting in the formation of a stable complex. GrpE releases ADP from DnaK; ATP binding to DnaK triggers the release of the substrate protein, thus completing the reaction cycle. Several rounds of ATP-dependent interactions between DnaJ, DnaK and GrpE are required for fully efficient folding. This is Protein GrpE from Pseudomonas entomophila (strain L48).